We begin with the raw amino-acid sequence, 269 residues long: Expansin-B11 (269 aa).

The N-terminal stretch at 1–30 (MTVVSIMWSLVQVQVLVAVALAFLVGGAWC) is a signal peptide. N-linked (GlcNAc...) asparagine glycosylation is present at N40. The Expansin-like EG45 domain occupies 69–175 (GGGCGYKDVN…RRVKCKYGSK (107 aa)). 3 disulfides stabilise this stretch: C72–C100, C103–C170, and C108–C114. Residues 187 to 268 (NYLALLVKYV…GWKPNTAYTA (82 aa)) enclose the Expansin-like CBD domain.

This sequence belongs to the expansin family. Expansin B subfamily. Expressed in pollen.

The protein resides in the secreted. The protein localises to the cell wall. It localises to the membrane. In terms of biological role, may aid fertilization by loosening the cell wall of the stigma and style, thereby facilitating penetration of the pollen tube. Acts selectively on grass cell walls, which are relatively poor in pectins and xyloglucans and rich in glucuronoarabinoxylans and (1-3),(1-4)-beta-D-glucans, when compared with cell walls of other angiosperms, including other monocots. The sequence is that of Expansin-B11 (EXPB11) from Zea mays (Maize).